The following is a 299-amino-acid chain: Formylglycine-generating enzyme (299 aa).

Residues C263 and C268 each coordinate Cu cation.

This sequence belongs to the sulfatase-modifying factor family. Requires Cu cation as cofactor.

The catalysed reaction is L-cysteinyl-[sulfatase] + 2 a thiol + O2 = an organic disulfide + 3-oxo-L-alanyl-[sulfatase] + hydrogen sulfide + H2O + H(+). It functions in the pathway protein modification; sulfatase oxidation. Oxidase that catalyzes the conversion of cysteine to 3-oxoalanine on target proteins. 3-oxoalanine modification, which is also named formylglycine (fGly), occurs in the maturation of arylsulfatases and some alkaline phosphatases that use the hydrated form of 3-oxoalanine as a catalytic nucleophile. The sequence is that of Formylglycine-generating enzyme from Mycobacterium tuberculosis (strain ATCC 25618 / H37Rv).